We begin with the raw amino-acid sequence, 1342 residues long: DNA-directed RNA polymerase subunit beta (1342 aa).

N6-acetyllysine occurs at positions 1022 and 1200.

Belongs to the RNA polymerase beta chain family. In terms of assembly, the RNAP catalytic core consists of 2 alpha, 1 beta, 1 beta' and 1 omega subunit. When a sigma factor is associated with the core the holoenzyme is formed, which can initiate transcription.

The catalysed reaction is RNA(n) + a ribonucleoside 5'-triphosphate = RNA(n+1) + diphosphate. Its function is as follows. DNA-dependent RNA polymerase catalyzes the transcription of DNA into RNA using the four ribonucleoside triphosphates as substrates. This Escherichia coli O6:K15:H31 (strain 536 / UPEC) protein is DNA-directed RNA polymerase subunit beta.